Consider the following 1263-residue polypeptide: DNA-directed RNA polymerase subunit beta (1263 aa).

The protein belongs to the RNA polymerase beta chain family. In terms of assembly, the RNAP catalytic core consists of 2 alpha, 1 beta, 1 beta' and 1 omega subunit. When a sigma factor is associated with the core the holoenzyme is formed, which can initiate transcription.

The catalysed reaction is RNA(n) + a ribonucleoside 5'-triphosphate = RNA(n+1) + diphosphate. DNA-dependent RNA polymerase catalyzes the transcription of DNA into RNA using the four ribonucleoside triphosphates as substrates. The polypeptide is DNA-directed RNA polymerase subunit beta (Thermotoga petrophila (strain ATCC BAA-488 / DSM 13995 / JCM 10881 / RKU-1)).